We begin with the raw amino-acid sequence, 52 residues long: Venom peptide 4a (52 aa).

An N-terminal signal peptide occupies residues 1 to 23 (MRSAILLVIVAIVAILGFLGVNA). AXPX repeat units follow at residues 23-26 (AEPL), 31-34 (AEPN), and 39-42 (AAPL). A propeptide spanning residues 24–41 (EPLPSPLAEPNPHAKAAP) is cleaved from the precursor. Alanine 51 carries the post-translational modification Alanine amide.

As to expression, expressed by the venom gland.

The protein localises to the secreted. This is Venom peptide 4a from Eumenes pomiformis (Potter wasp).